The following is a 28-amino-acid chain: Ranatuerin-2SEb (28 aa).

The cysteines at positions 23 and 28 are disulfide-linked.

As to expression, expressed by the skin glands.

It localises to the secreted. Mast cell degranulating peptide. Causes histamine release from rat peritoneal mast cells in vitro. Has antibacterial activity against the Gram-negative bacterium E.coli K12 and Gram-positive bacterium M.luteus NCT C2665. The chain is Ranatuerin-2SEb from Lithobates sevosus (Dusky gopher frog).